We begin with the raw amino-acid sequence, 1222 residues long: Serine/threonine-protein kinase WNK4 (1222 aa).

Residues 1-17 (MLAPRNTETGVHMSQTE) are compositionally biased toward polar residues. Residues 1-163 (MLAPRNTETG…KEDTETQAVA (163 aa)) form a disordered region. Residue Ser-95 is modified to Phosphoserine. The segment covering 135–152 (EPPRVPDAAARERRREQE) has biased composition (basic and acidic residues). Residues Lys-154 and Lys-172 each participate in a glycyl lysine isopeptide (Lys-Gly) (interchain with G-Cter in ubiquitin) cross-link. Positions 171-429 (LKFDIEIGRG…IQDLLTHAFF (259 aa)) constitute a Protein kinase domain. Ser-181 is a binding site for ATP. Residues Lys-183, Lys-223, and Lys-238 each participate in a glycyl lysine isopeptide (Lys-Gly) (interchain with G-Cter in ubiquitin) cross-link. Residues 251–254 (TELM) and Lys-301 contribute to the ATP site. The active-site Proton acceptor is the Asp-318. A Glycyl lysine isopeptide (Lys-Gly) (interchain with G-Cter in ubiquitin) cross-link involves residue Lys-325. Phosphoserine; by autocatalysis occurs at positions 328 and 332. Residues Lys-384, Lys-390, Lys-447, and Lys-451 each participate in a glycyl lysine isopeptide (Lys-Gly) (interchain with G-Cter in ubiquitin) cross-link. Residues 527–562 (LEVLPPDSGPPPATVSMTPGPPSAFPPEPEEPEADQ) are disordered. A compositionally biased stretch (pro residues) spans 533–553 (DSGPPPATVSMTPGPPSAFPP). The segment at 554–564 (EPEEPEADQHQ) is interaction with KLHL3. Ser-572 is subject to Phosphoserine. Disordered regions lie at residues 591 to 612 (FLDASDPALQPPGGMPSSPAEP), 626 to 679 (RSGP…SVSD), 747 to 809 (DAGP…GTPF), 836 to 873 (QVSSNPCPQAPSSLLPSSSGASQVPFPSPSLPTSSPLP), and 927 to 1087 (SPGL…QPSP). Over residues 627 to 638 (SGPGSDFSPGDS) the composition is skewed to low complexity. Over residues 659-672 (NPVKTLRRRPRSRL) the composition is skewed to basic residues. Composition is skewed to low complexity over residues 792 to 809 (FSTSPSSPGTPLSPGTPF) and 845 to 873 (APSSLLPSSSGASQVPFPSPSLPTSSPLP). The span at 935 to 946 (PPAPPGPLPSMP) shows a compositional bias: pro residues. The segment covering 953–963 (DQESLSAQTAE) has biased composition (polar residues). Residue Lys-990 forms a Glycyl lysine isopeptide (Lys-Gly) (interchain with G-Cter in ubiquitin) linkage. The RFXV motif signature appears at 996-999 (RFQV). Position 1014 is a phosphoserine (Ser-1014). A compositionally biased stretch (basic and acidic residues) spans 1044 to 1056 (ETREALAESDRAA). Positions 1076–1086 (GGSSPILSQPS) are enriched in polar residues. Glycyl lysine isopeptide (Lys-Gly) (interchain with G-Cter in ubiquitin) cross-links involve residues Lys-1123, Lys-1136, and Lys-1137. Residues 1169–1222 (SKGSFPTSRRNSLQRSDLPGPGIMRRNSLSGSSTGSQEQRASKGVTFAGDVGRM) form a disordered region. Polar residues-rich tracts occupy residues 1172 to 1183 (SFPTSRRNSLQR) and 1195 to 1207 (NSLSGSSTGSQEQ). The residue at position 1196 (Ser-1196) is a Phosphoserine.

It belongs to the protein kinase superfamily. Ser/Thr protein kinase family. WNK subfamily. Interacts with the C-terminal region of KCNJ1. Interacts with WNK1 and WNK3. Interacts with KLHL3. Mg(2+) is required as a cofactor. In terms of processing, autophosphorylated at Ser-328 and Ser-332, promoting its activation. Phosphorylated by WNK1 and WNK3. Phosphorylated at Ser-572 in a MAP3K15/ASK3-dependent process in response to osmotic stress or hypotonic low-chloride stimulation. Ubiquitinated by the BCR(KLHL3) complex, leading to its degradation. Also ubiquitinated by the BCR(KLHL2) complex.

Its subcellular location is the cell junction. It is found in the tight junction. The catalysed reaction is L-seryl-[protein] + ATP = O-phospho-L-seryl-[protein] + ADP + H(+). It carries out the reaction L-threonyl-[protein] + ATP = O-phospho-L-threonyl-[protein] + ADP + H(+). With respect to regulation, activation requires autophosphorylation of Ser-328 and Ser-332. Autophosphorylation and subsequent activation is inhibited by increases in intracellular ionic strength: Cl(-) potently inhibits WNK4 kinase activity via direct binding. Also inhibited by K(+) ions. Serine/threonine-protein kinase component of the WNK4-SPAK/OSR1 kinase cascade, which acts as a key regulator of ion transport in the distal nephron and blood pressure. The WNK4-SPAK/OSR1 kinase cascade is composed of WNK4, which mediates phosphorylation and activation of downstream kinases OXSR1/OSR1 and STK39/SPAK. Following activation, OXSR1/OSR1 and STK39/SPAK catalyze phosphorylation of ion cotransporters, such as SLC12A1/NKCC2, SLC12A2/NKCC1, SLC12A3/NCC, SLC12A5/KCC2 or SLC12A6/KCC3, regulating their activity. Acts as a molecular switch that regulates the balance between renal salt reabsorption and K(+) secretion by modulating the activities of renal transporters and channels, including the Na-Cl cotransporter SLC12A3/NCC and the K(+) channel, KCNJ1/ROMK. Regulates NaCl reabsorption in the distal nephron by activating the thiazide-sensitive Na-Cl cotransporter SLC12A3/NCC in distal convoluted tubule cells of kidney: activates SLC12A3/NCC in a OXSR1/OSR1- and STK39/SPAK-dependent process. Also acts as a scaffold protein independently of its protein kinase activity: negatively regulates cell membrane localization of various transporters and channels (CFTR, KCNJ1/ROMK, SLC4A4, SLC26A9 and TRPV4) by clathrin-dependent endocytosis. Also inhibits the activity of the epithelial Na(+) channel (ENaC) SCNN1A, SCNN1B, SCNN1D in a inase-independent mechanism. May also phosphorylate NEDD4L. This Rattus norvegicus (Rat) protein is Serine/threonine-protein kinase WNK4.